Here is a 410-residue protein sequence, read N- to C-terminus: UDP-N-acetylglucosamine--N-acetylmuramyl-(pentapeptide) pyrophosphoryl-undecaprenol N-acetylglucosamine transferase (410 aa).

Positions 1–34 (MKDTVSQPAGGRGATAPRPADAASPSCGSSPSAD) are disordered. Low complexity predominate over residues 14-34 (ATAPRPADAASPSCGSSPSAD). Residues 45 to 47 (TAG), asparagine 167, arginine 204, serine 238, and glutamine 334 contribute to the UDP-N-acetyl-alpha-D-glucosamine site.

Belongs to the glycosyltransferase 28 family. MurG subfamily.

It is found in the cell membrane. The catalysed reaction is di-trans,octa-cis-undecaprenyl diphospho-N-acetyl-alpha-D-muramoyl-L-alanyl-D-glutamyl-meso-2,6-diaminopimeloyl-D-alanyl-D-alanine + UDP-N-acetyl-alpha-D-glucosamine = di-trans,octa-cis-undecaprenyl diphospho-[N-acetyl-alpha-D-glucosaminyl-(1-&gt;4)]-N-acetyl-alpha-D-muramoyl-L-alanyl-D-glutamyl-meso-2,6-diaminopimeloyl-D-alanyl-D-alanine + UDP + H(+). The protein operates within cell wall biogenesis; peptidoglycan biosynthesis. Its function is as follows. Cell wall formation. Catalyzes the transfer of a GlcNAc subunit on undecaprenyl-pyrophosphoryl-MurNAc-pentapeptide (lipid intermediate I) to form undecaprenyl-pyrophosphoryl-MurNAc-(pentapeptide)GlcNAc (lipid intermediate II). The sequence is that of UDP-N-acetylglucosamine--N-acetylmuramyl-(pentapeptide) pyrophosphoryl-undecaprenol N-acetylglucosamine transferase from Mycobacterium bovis (strain ATCC BAA-935 / AF2122/97).